The chain runs to 57 residues: Large ribosomal subunit protein bL32 (57 aa).

This sequence belongs to the bacterial ribosomal protein bL32 family.

This chain is Large ribosomal subunit protein bL32, found in Staphylococcus saprophyticus subsp. saprophyticus (strain ATCC 15305 / DSM 20229 / NCIMB 8711 / NCTC 7292 / S-41).